Consider the following 456-residue polypeptide: Phosphomannomutase (456 aa).

Serine 98 acts as the Phosphoserine intermediate in catalysis. Mg(2+) contacts are provided by serine 98, aspartate 246, aspartate 248, and aspartate 250.

Belongs to the phosphohexose mutase family. Mg(2+) is required as a cofactor.

The enzyme catalyses alpha-D-mannose 1-phosphate = D-mannose 6-phosphate. It functions in the pathway nucleotide-sugar biosynthesis; GDP-alpha-D-mannose biosynthesis; alpha-D-mannose 1-phosphate from D-fructose 6-phosphate: step 2/2. It participates in bacterial outer membrane biogenesis; LPS O-antigen biosynthesis. In terms of biological role, involved in GDP-mannose biosynthesis which serves as the activated sugar nucleotide precursor for mannose residues in cell surface polysaccharides. This enzyme participates in synthesis of the LPS O9 antigen. This is Phosphomannomutase (manB) from Escherichia coli.